The sequence spans 183 residues: Cell division protein ZapC (183 aa).

This sequence belongs to the ZapC family. In terms of assembly, interacts directly with FtsZ.

It localises to the cytoplasm. Its function is as follows. Contributes to the efficiency of the cell division process by stabilizing the polymeric form of the cell division protein FtsZ. Acts by promoting interactions between FtsZ protofilaments and suppressing the GTPase activity of FtsZ. This is Cell division protein ZapC from Proteus mirabilis (strain HI4320).